A 398-amino-acid chain; its full sequence is 2-amino-3-ketobutyrate coenzyme A ligase (398 aa).

111–112 (CF) contributes to the pyridoxal 5'-phosphate binding site. Position 136 (His136) interacts with substrate. Pyridoxal 5'-phosphate is bound by residues Ser185, 210-213 (DDSH), 241-244 (TLGK), and 274-275 (SN). Lys244 is modified (N6-(pyridoxal phosphate)lysine). Position 368 (Arg368) interacts with substrate.

This sequence belongs to the class-II pyridoxal-phosphate-dependent aminotransferase family. In terms of assembly, homodimer. It depends on pyridoxal 5'-phosphate as a cofactor.

It carries out the reaction glycine + acetyl-CoA = (2S)-2-amino-3-oxobutanoate + CoA. It participates in amino-acid degradation; L-threonine degradation via oxydo-reductase pathway; glycine from L-threonine: step 2/2. Functionally, catalyzes the cleavage of 2-amino-3-ketobutyrate to glycine and acetyl-CoA. The sequence is that of 2-amino-3-ketobutyrate coenzyme A ligase from Escherichia coli (strain K12).